A 488-amino-acid chain; its full sequence is 3-octaprenyl-4-hydroxybenzoate carboxy-lyase (488 aa).

N172 provides a ligand contact to Mn(2+). Prenylated FMN-binding positions include 175-177, 189-191, and 194-195; these read IYR, RWL, and RG. E238 lines the Mn(2+) pocket. Residue D287 is the Proton donor of the active site.

This sequence belongs to the UbiD family. In terms of assembly, homohexamer. Prenylated FMN serves as cofactor. The cofactor is Mn(2+).

The protein localises to the cell membrane. It carries out the reaction a 4-hydroxy-3-(all-trans-polyprenyl)benzoate + H(+) = a 2-(all-trans-polyprenyl)phenol + CO2. Its pathway is cofactor biosynthesis; ubiquinone biosynthesis. Catalyzes the decarboxylation of 3-octaprenyl-4-hydroxy benzoate to 2-octaprenylphenol, an intermediate step in ubiquinone biosynthesis. In Pseudomonas fluorescens (strain Pf0-1), this protein is 3-octaprenyl-4-hydroxybenzoate carboxy-lyase.